Here is a 120-residue protein sequence, read N- to C-terminus: Large ribosomal subunit protein bL20 (120 aa).

Belongs to the bacterial ribosomal protein bL20 family.

Functionally, binds directly to 23S ribosomal RNA and is necessary for the in vitro assembly process of the 50S ribosomal subunit. It is not involved in the protein synthesizing functions of that subunit. The protein is Large ribosomal subunit protein bL20 of Chlamydia abortus (strain DSM 27085 / S26/3) (Chlamydophila abortus).